Reading from the N-terminus, the 87-residue chain is Small ribosomal subunit protein uS15c (87 aa).

This sequence belongs to the universal ribosomal protein uS15 family. As to quaternary structure, part of the 30S ribosomal subunit.

It is found in the plastid. Its subcellular location is the chloroplast. The chain is Small ribosomal subunit protein uS15c (rps15) from Oenothera biennis (German evening primrose).